Consider the following 153-residue polypeptide: NAD(P)H-quinone oxidoreductase subunit N (153 aa).

Belongs to the complex I NdhN subunit family. In terms of assembly, NDH-1 can be composed of about 15 different subunits; different subcomplexes with different compositions have been identified which probably have different functions.

It is found in the cellular thylakoid membrane. It carries out the reaction a plastoquinone + NADH + (n+1) H(+)(in) = a plastoquinol + NAD(+) + n H(+)(out). It catalyses the reaction a plastoquinone + NADPH + (n+1) H(+)(in) = a plastoquinol + NADP(+) + n H(+)(out). Functionally, NDH-1 shuttles electrons from an unknown electron donor, via FMN and iron-sulfur (Fe-S) centers, to quinones in the respiratory and/or the photosynthetic chain. The immediate electron acceptor for the enzyme in this species is believed to be plastoquinone. Couples the redox reaction to proton translocation, and thus conserves the redox energy in a proton gradient. Cyanobacterial NDH-1 also plays a role in inorganic carbon-concentration. The polypeptide is NAD(P)H-quinone oxidoreductase subunit N (Prochlorococcus marinus (strain MIT 9303)).